The chain runs to 195 residues: Nucleoside triphosphate pyrophosphatase (195 aa).

Residue Asp70 is the Proton acceptor of the active site.

It belongs to the Maf family. A divalent metal cation is required as a cofactor.

The protein resides in the cytoplasm. It catalyses the reaction a ribonucleoside 5'-triphosphate + H2O = a ribonucleoside 5'-phosphate + diphosphate + H(+). The enzyme catalyses a 2'-deoxyribonucleoside 5'-triphosphate + H2O = a 2'-deoxyribonucleoside 5'-phosphate + diphosphate + H(+). Its function is as follows. Nucleoside triphosphate pyrophosphatase. May have a dual role in cell division arrest and in preventing the incorporation of modified nucleotides into cellular nucleic acids. The protein is Nucleoside triphosphate pyrophosphatase of Microcystis aeruginosa (strain NIES-843 / IAM M-2473).